We begin with the raw amino-acid sequence, 351 residues long: MNLAWKEIKFYRFRYTLIMLIIFLLGSMVLFISGLAQGLARENISYLNNMPAEHYIVEDNKEPKLESSQLNQSQQNKIEKIIHENATQMGTQTLKINQQDQDVITLNTPKHLTPKLVSGNYPKKQNEIAISEKLTGNDLKVGDTVTFKGHHHNYKISGIMNESMYSHSSMILMNKEAFKSLNKQVSTFYPVDKINKDNKESLKQIKGIKVVNEKALTDNIASYQAEQMPLNLMIISLFVITAIVLSAFFYVMTIQKIPQIGILKAIGIKTKHLLTALLLQIILTTMVGVILAFSVILILNAFMPVTMPFYLSYSQVLLMIVVFLIVGLIGALLSFIKVLKVDPIEAIGGME.

Helical transmembrane passes span 16-36 (TLIMLIIFLLGSMVLFISGLA), 232-252 (LMIISLFVITAIVLSAFFYVM), 278-298 (LLQIILTTMVGVILAFSVILI), and 316-336 (VLLMIVVFLIVGLIGALLSFI).

Belongs to the ABC-4 integral membrane protein family. HrtB subfamily. In terms of assembly, the complex is composed of two ATP-binding proteins (HrtA), two transmembrane proteins (HrtB) and a solute-binding protein.

It localises to the cell membrane. Part of the ABC transporter complex hrt involved in hemin import. Responsible for the translocation of the substrate across the membrane. This chain is Putative hemin transport system permease protein HrtB (hrtB), found in Staphylococcus haemolyticus (strain JCSC1435).